The sequence spans 308 residues: SAP30-binding protein (308 aa).

Positions 15 to 101 are disordered; the sequence is AEYSDPESDG…EAEKRDPQEL (87 aa). Ser18, Ser22, Ser43, and Ser52 each carry phosphoserine. Acidic residues predominate over residues 57–78; that stretch reads DEDGYEEEEDENSKQSEDDDSE. Residues 79 to 99 show a composition bias toward basic and acidic residues; the sequence is TEKPEADDPKDNTEAEKRDPQ. Residue Lys95 forms a Glycyl lysine isopeptide (Lys-Gly) (interchain with G-Cter in SUMO2) linkage. Phosphoserine is present on Ser113. Glycyl lysine isopeptide (Lys-Gly) (interchain with G-Cter in SUMO2) cross-links involve residues Lys220, Lys304, and Lys305.

The protein belongs to the HCNGP family. As to quaternary structure, interacts with histone deacetylase complex subunit SAP30.

The protein localises to the nucleus. Functionally, plays a role in transcriptional repression by promoting histone deacetylase activity, leading to deacetylation of histone H3. May be involved in the regulation of beta-2-microglobulin genes. This chain is SAP30-binding protein (Sap30bp), found in Mus musculus (Mouse).